A 150-amino-acid polypeptide reads, in one-letter code: Heat shock protein beta-3 (150 aa).

Positions 47-150 (KTRAAQSPPV…VEVKDPVGTK (104 aa)) constitute a sHSP domain.

It belongs to the small heat shock protein (HSP20) family.

It is found in the cytoplasm. It localises to the nucleus. In terms of biological role, inhibitor of actin polymerization. The chain is Heat shock protein beta-3 (HSPB3) from Homo sapiens (Human).